Consider the following 1474-residue polypeptide: SH3 and multiple ankyrin repeat domains protein 2 (1474 aa).

Over residues 66 to 76 the composition is skewed to polar residues; the sequence is LSPQLLQQTPS. The segment at 66 to 125 is disordered; that stretch reads LSPQLLQQTPSKPDGATKSLGSYAPGPRSRSPSLNRLGGAGEDGKRPQPPHWHVGSPFTP. Residues 148–207 enclose the SH3 domain; sequence VPGRLFVAIKPYQPQVDGEIPLHRGDRVKVLSIGEGGFWEGSARGHIGWFPAECVEEVQC. Gln-162 is subject to Phosphoserine. One can recognise a PDZ domain in the interval 248-342; the sequence is TVVLQKKDNE…HLVLKVVTVT (95 aa). At Ser-373 the chain carries Phosphoserine. The disordered stretch occupies residues 392-413; it reads RKKKDKPEEIVPASKPSRTAEN. Ser-457 carries the post-translational modification Phosphoserine. Thr-486 is subject to Phosphothreonine. Residues 504–534 are disordered; the sequence is LSMPDTSEDIPPPPQSVPPSPPPPSPTTYNC. Over residues 513–529 the composition is skewed to pro residues; it reads IPPPPQSVPPSPPPPSP. At Ser-586 the chain carries Phosphoserine. Disordered stretches follow at residues 659–920, 947–995, and 1057–1153; these read TIIV…ADDK, PVAG…PAAA, and PALA…ESMD. Residues 666-678 are compositionally biased toward low complexity; that stretch reads STSSSGKSSQGSS. A compositionally biased stretch (basic and acidic residues) spans 711–722; that stretch reads VRDREKRLEARR. A Phosphoserine modification is found at Ser-724. Positions 783-795 are enriched in gly residues; it reads LGGGEAGAQGEAG. 2 stretches are compositionally biased toward low complexity: residues 811–823 and 833–846; these read PAAA…PASP and RLLD…LALS. Basic and acidic residues-rich tracts occupy residues 847-868 and 899-920; these read ARDR…KADL and RRQE…ADDK. Thr-903 is modified (phosphothreonine). Polar residues predominate over residues 1075–1085; that stretch reads SLNSSQPANST. Residues 1119 to 1130 show a composition bias toward basic and acidic residues; it reads VDSRSSSDHHLE. Residues 1131-1151 are compositionally biased toward low complexity; that stretch reads TTSTISTVSSISTLSSEGGES. An SH3-binding motif is present at residues 1169-1175; that stretch reads PPVPPKP. 2 disordered regions span residues 1195–1216 and 1260–1401; these read EDTD…SAQA and NRGK…ISNK. Residues 1202 to 1212 are compositionally biased toward pro residues; sequence IPPPAPPPPPG. Over residues 1291–1305 the composition is skewed to low complexity; the sequence is STVSGTRSTTVTFTV. Thr-1292 carries O-linked (GlcNAc) threonine glycosylation. Residues 1307-1317 show a composition bias toward polar residues; the sequence is PGTSQPITLQS. A phosphoserine mark is found at Ser-1334 and Ser-1338. 2 stretches are compositionally biased toward low complexity: residues 1352–1363 and 1385–1399; these read SAAAASPSPTLS and RSRS…QPIS. In terms of domain architecture, SAM spans 1411–1474; sequence WTKPDVADWL…ERALKQLLDR (64 aa).

The protein belongs to the SHANK family. In terms of assembly, is part of a complex with DLG4/PSD-95 and DLGAP1/GKAP. Interacts with CTTN/cortactin SH3 domain, DLGAP1/GKAP and alpha-latrotoxin receptor 1. Interacts with DNM2, DBNL, GRID2, BAIAP2, SLC9A3, PLCB3 and CFTR. Interacts with ABI1 (via SH3 domain). Interacts (via proline-rich region) with PDE4D isoform 5 (via N-terminal region). Interacts with PDE4D isoform 33, isoform 4, isoform 7, isoform 8 and isoform 9 but not isoform 32 and isoform 6. Interacts weakly with PDE4D isoform 31. Interacts with ABI1. As to expression, expressed in epithelial cells (at protein level). All isoforms except isoform 7 are expressed predominantly in brain, with highest levels in olfactory bulb, cerebral cortex, cerebellum, central gray matter and hippocampus. Moderate levels of expression are seen in the caudate putamen, thalamic nuclei and brain stem. In cerebellum primarily expressed in Purkinje cells. Isoform 7 is not expressed in brain but expressed in liver, cholangiocytes and thymus. Isoform 7 is present in pancreas, colonic mucosa and thymocytes (at protein level).

The protein localises to the apical cell membrane. It is found in the cytoplasm. Its subcellular location is the synapse. It localises to the postsynaptic density. The protein resides in the cell projection. The protein localises to the growth cone. It is found in the dendritic spine. Seems to be an adapter protein in the postsynaptic density (PSD) of excitatory synapses that interconnects receptors of the postsynaptic membrane including NMDA-type and metabotropic glutamate receptors, and the actin-based cytoskeleton. May play a role in the structural and functional organization of the dendritic spine and synaptic junction. This chain is SH3 and multiple ankyrin repeat domains protein 2 (Shank2), found in Rattus norvegicus (Rat).